The sequence spans 248 residues: mRNA-decapping protein OPG122 (248 aa).

The Nudix hydrolase domain occupies 45–227 (HKRVSVSAIL…IAKYALDTAK (183 aa)). The Nudix box signature appears at 125–147 (GGILKRGENVPECLSREIKEEVN). Glu132 is a binding site for Mg(2+). Residue Glu141 is the Nucleophile of the active site. Residue Glu145 coordinates Mn(2+). Asp167 is a Mg(2+) binding site.

Belongs to the Nudix hydrolase family. Requires Mg(2+) as cofactor. It depends on Mn(2+) as a cofactor.

It localises to the host mitochondrion. Functionally, decapping enzyme that remove the protective 5'-cap from both host and viral mRNAs to commit transcripts for decay by the cellular exonuclease XRN1. Preferentially targets spliced mRNAs and since all viral genes are intronless, it preferentially targets host over viral transcripts. Acceleration of the turnover of cellular transcripts promotes the shutoff of host protein synthesis and therefore diminish the magnitude of antiviral response. The sequence is that of mRNA-decapping protein OPG122 (OPG122) from Variola virus (isolate Human/India/Ind3/1967) (VARV).